Here is a 417-residue protein sequence, read N- to C-terminus: MSELLPMATYNLNIEPYSPTPAIDVTVPVTVRLTMAAIDPESLDDEKKPATLRLIRRNPAFDDEDDLLADSEEEEEEESEEESEPETKKPKKKAAKAESEEEDSEEEDSEGEDSDDEFEEFVLATLSPESQYQQTLDLVISPEEEVQFVVTGSYRVSLSGNYVQHPYDDEDSYDEDHEGCGENCACDDDHEGCGDDCACDDDSDYDLTPDEEDILDMEDASDVEAKIEELVEQEEANEKRKADEDEPKAAKKQKKDQKDTKKDAKKDAKKDQKDQKDAKKDAKKEKKVEFKKDLEEGPSKKKDDKPKTKILEGGVVIEDRVVGSGKAAKKGARVGMRYIGKLKNGKVFDKNTSGKPFVFKLGHGEVIKGWDIGVAGMAVGGERRIVIPAAYAYGKQALPGIPANSELTFDVKLVSLK.

Disordered regions lie at residues 42 to 129 (SLDD…LSPE) and 191 to 307 (EGCG…DKPK). Acidic residues-rich tracts occupy residues 61–84 (FDDEDDLLADSEEEEEEESEEESE), 99–120 (SEEEDSEEEDSEGEDSDDEFEE), and 197–222 (CACDDDSDYDLTPDEEDILDMEDASD). Basic and acidic residues-rich tracts occupy residues 236–249 (ANEKRKADEDEPKA) and 256–307 (DQKD…DKPK). Residues 331 to 417 (GARVGMRYIG…TFDVKLVSLK (87 aa)) enclose the PPIase FKBP-type domain.

It belongs to the FKBP-type PPIase family. FKBP3/4 subfamily.

The protein localises to the nucleus. The protein resides in the nucleolus. The enzyme catalyses [protein]-peptidylproline (omega=180) = [protein]-peptidylproline (omega=0). Its activity is regulated as follows. Inhibited by both FK506 and rapamycin. Functionally, PPIases accelerate the folding of proteins. It catalyzes the cis-trans isomerization of proline imidic peptide bonds in oligopeptides. The sequence is that of FK506-binding protein 3 (FPR3) from Eremothecium gossypii (strain ATCC 10895 / CBS 109.51 / FGSC 9923 / NRRL Y-1056) (Yeast).